Here is a 366-residue protein sequence, read N- to C-terminus: UPF0329 protein ECU01_0130/ECU01_1480/ECU08_0060 (366 aa).

The disordered stretch occupies residues 325–366 (IRKEEKRIRKEEERAKNEEELLRMVESEEGKSGEGEEGCRRG).

The protein belongs to the UPF0329 family.

This Encephalitozoon cuniculi (strain GB-M1) (Microsporidian parasite) protein is UPF0329 protein ECU01_0130/ECU01_1480/ECU08_0060.